Here is a 65-residue protein sequence, read N- to C-terminus: Small, acid-soluble spore protein Tlp (65 aa).

The protein belongs to the Tlp family.

The protein localises to the spore core. This chain is Small, acid-soluble spore protein Tlp, found in Bacillus anthracis (strain A0248).